The following is a 1077-amino-acid chain: ATP-dependent helicase/deoxyribonuclease subunit B (1077 aa).

It belongs to the helicase family. AddB/RexB type 2 subfamily. In terms of assembly, heterodimer of AddA and RexB. It depends on Mg(2+) as a cofactor.

In terms of biological role, the heterodimer acts as both an ATP-dependent DNA helicase and an ATP-dependent, dual-direction single-stranded exonuclease. Recognizes the chi site generating a DNA molecule suitable for the initiation of homologous recombination. This subunit has 5' -&gt; 3' nuclease activity but not helicase activity. This Streptococcus agalactiae serotype III (strain NEM316) protein is ATP-dependent helicase/deoxyribonuclease subunit B.